A 693-amino-acid chain; its full sequence is Cyclin-dependent kinase G-1 (693 aa).

Residues 1-10 (MAAGSHGGYR) show a composition bias toward gly residues. Disordered stretches follow at residues 1–148 (MAAG…ARDP) and 236–308 (KKKK…DDYP). Basic and acidic residues predominate over residues 13 to 24 (EVAREREHDVGV). Residues 26 to 39 (RRSKEHYHHRHPSR) show a composition bias toward basic residues. Composition is skewed to basic and acidic residues over residues 40-54 (HRDS…RSGG), 75-87 (RPSE…REPG), and 97-122 (RSGE…EEAK). A compositionally biased stretch (low complexity) spans 268–284 (SVRSSSRSSDSGVLQGS). The span at 287–304 (RDLEVEKGDNIDVEKAAD) shows a compositional bias: basic and acidic residues. One can recognise a Protein kinase domain in the interval 349–640 (FERLNTINEG…AEDALNHEWF (292 aa)). Residues 355 to 363 (INEGTYGVV) and Lys378 each bind ATP. Thr359 carries the post-translational modification Phosphothreonine. The residue at position 360 (Tyr360) is a Phosphotyrosine. Residue Asp473 is the Proton acceptor of the active site. Position 500 is a phosphoserine (Ser500). Position 506 is a phosphothreonine (Thr506). Residues 664 to 693 (RFKKHMKSPDPLEEQWMKEQGNNGDRGLFG) are disordered.

Belongs to the protein kinase superfamily. CMGC Ser/Thr protein kinase family. CDC2/CDKX subfamily.

It carries out the reaction L-seryl-[protein] + ATP = O-phospho-L-seryl-[protein] + ADP + H(+). It catalyses the reaction L-threonyl-[protein] + ATP = O-phospho-L-threonyl-[protein] + ADP + H(+). The enzyme catalyses [DNA-directed RNA polymerase] + ATP = phospho-[DNA-directed RNA polymerase] + ADP + H(+). This chain is Cyclin-dependent kinase G-1 (CDKG-1), found in Oryza sativa subsp. indica (Rice).